The sequence spans 489 residues: UDP-N-acetylmuramoyl-L-alanyl-D-glutamate--2,6-diaminopimelate ligase (489 aa).

S34 serves as a coordination point for UDP-N-acetyl-alpha-D-muramoyl-L-alanyl-D-glutamate. 110–116 (GTAGKTS) is an ATP binding site. Residues 152–153 (TT), S179, Q185, and R187 each bind UDP-N-acetyl-alpha-D-muramoyl-L-alanyl-D-glutamate. K219 is modified (N6-carboxylysine). Meso-2,6-diaminopimelate contacts are provided by residues R383, 407 to 410 (DNPR), G455, and E459. The short motif at 407–410 (DNPR) is the Meso-diaminopimelate recognition motif element.

This sequence belongs to the MurCDEF family. MurE subfamily. Mg(2+) is required as a cofactor. In terms of processing, carboxylation is probably crucial for Mg(2+) binding and, consequently, for the gamma-phosphate positioning of ATP.

The protein localises to the cytoplasm. It catalyses the reaction UDP-N-acetyl-alpha-D-muramoyl-L-alanyl-D-glutamate + meso-2,6-diaminopimelate + ATP = UDP-N-acetyl-alpha-D-muramoyl-L-alanyl-gamma-D-glutamyl-meso-2,6-diaminopimelate + ADP + phosphate + H(+). The protein operates within cell wall biogenesis; peptidoglycan biosynthesis. In terms of biological role, catalyzes the addition of meso-diaminopimelic acid to the nucleotide precursor UDP-N-acetylmuramoyl-L-alanyl-D-glutamate (UMAG) in the biosynthesis of bacterial cell-wall peptidoglycan. The chain is UDP-N-acetylmuramoyl-L-alanyl-D-glutamate--2,6-diaminopimelate ligase from Agrobacterium fabrum (strain C58 / ATCC 33970) (Agrobacterium tumefaciens (strain C58)).